The following is an 81-amino-acid chain: Large ribosomal subunit protein uL23 (81 aa).

It belongs to the universal ribosomal protein uL23 family. As to quaternary structure, part of the 50S ribosomal subunit. Contacts protein L29.

Its function is as follows. Binds to 23S rRNA. One of the proteins that surrounds the polypeptide exit tunnel on the outside of the ribosome. This is Large ribosomal subunit protein uL23 from Pyrobaculum aerophilum (strain ATCC 51768 / DSM 7523 / JCM 9630 / CIP 104966 / NBRC 100827 / IM2).